The chain runs to 3295 residues: Toxin CdiA (3295 aa).

The two-partner system transport domain (TPS) stretch occupies residues 33 to 366 (PSSGVGHTQR…GKGNTQLTTA (334 aa)). A helical transmembrane segment spans residues 55-75 (LLIALGCISLSAQAAIVADGS). The segment at 353-1574 (GVLYGKGNTQ…LLVYAKTLTN (1222 aa)) is FHA-1. The interval 1165-1185 (PPSSIPPSSTQSSSTQASASP) is disordered. The tract at residues 1575-1796 (RRQILTATTD…LKTDKGDYAP (222 aa)) is receptor binding domain (RBD). The segment at 1797–1977 (GPEAALSLAN…GVKPGDLRAN (181 aa)) is YP domain. Residues 1806–1831 (NISPPSSLDATGPRGVPPPSDDLNRT) are disordered. Residues 1998 to 2035 (GAISASNNLQISMAKDITLNNRCGLLQAGNHLQLSTLN) form a periplasmic FHA-1 repeat (pFR) region. The segment at 2022 to 2676 (LLQAGNHLQL…DRDNYDAKQS (655 aa)) is FHA-2. Disordered stretches follow at residues 2260–2292 (TSQT…EGRS) and 2823–2847 (QQNV…FDKE). Positions 2823–2838 (QQNVDDLSRDTGNANG) are enriched in polar residues. Positions 3073-3076 (VENN) match the VENN CT cleavage motif motif. The segment at 3073–3295 (VENNLLGGNE…QKKDAMEDSK (223 aa)) is CT domain. The interval 3276 to 3295 (SSEFGSSLIQQKKDAMEDSK) is disordered. Residues 3286-3295 (QKKDAMEDSK) are compositionally biased toward basic and acidic residues.

In the N-terminal section; belongs to the CdiA toxin family. As to quaternary structure, probably interacts with cognate immunity protein CdiI.

It is found in the membrane. Its subcellular location is the target cell. The protein resides in the target cell cytoplasm. Functionally, toxic component of a toxin-immunity protein module, which functions as a cellular contact-dependent growth inhibition (CDI) system. CDI modules allow bacteria to communicate with and inhibit the growth of closely related neighboring bacteria in a contact-dependent fashion. CDI is neutralized by its cognate immunity protein CdiI, but not by non-cognate CdiI from other bacteria. In terms of biological role, the CdiA protein is thought to be exported from the cell through the central lumen of CdiB, the other half of its two-partner system (TPS). The TPS domain probably remains associated with CdiB while the FHA-1 domain forms an extended filament with the receptor-binding domain (RBD) at its extremity; in the secretion arrested state the C-terminus of the RBD and YP domains form a hairpin-like structure as the FHA-2, PT and CT domains are periplasmic. The YP domain is probably responsible for this arrest at the point where it re-enters the host cell periplasm. Upon binding to a target cell outer membrane receptor a signal is transmitted to activate secretion. The filament elongates slightly, the rest of CdiA is secreted and the FHA-2 domain becomes stably associated with the target cell's outer membrane where it facilitates entry of the toxic CT domain into the target cell periplasm. From there the toxic CT domain is cleaved and gains access to the target cell cytoplasm via an inner membrane protein. This Yersinia pestis protein is Toxin CdiA.